Reading from the N-terminus, the 437-residue chain is Glutamyl-tRNA reductase (437 aa).

Substrate contacts are provided by residues 49–52, S109, 114–116, and Q120; these read TCNR and ETQ. The Nucleophile role is filled by C50. 189-194 contacts NADP(+); the sequence is GAGKMS.

This sequence belongs to the glutamyl-tRNA reductase family. Homodimer.

The catalysed reaction is (S)-4-amino-5-oxopentanoate + tRNA(Glu) + NADP(+) = L-glutamyl-tRNA(Glu) + NADPH + H(+). It participates in porphyrin-containing compound metabolism; protoporphyrin-IX biosynthesis; 5-aminolevulinate from L-glutamyl-tRNA(Glu): step 1/2. Catalyzes the NADPH-dependent reduction of glutamyl-tRNA(Glu) to glutamate 1-semialdehyde (GSA). This Paenibacillus macerans (Bacillus macerans) protein is Glutamyl-tRNA reductase.